The sequence spans 298 residues: GTPase Era (298 aa).

In terms of domain architecture, Era-type G spans 3–170 (KSGFVAILGR…VQLLKDNLEE (168 aa)). The interval 11–18 (GRPNVGKS) is G1. GTP is bound at residue 11–18 (GRPNVGKS). The segment at 37–41 (QSTRN) is G2. Positions 58–61 (DTPG) are G3. GTP is bound by residues 58-62 (DTPGI) and 120-123 (NKID). Residues 120-123 (NKID) form a G4 region. The segment at 149–151 (ISA) is G5. The KH type-2 domain maps to 201 to 279 (TQQEVPHSVA…YLETWVKVKK (79 aa)).

Belongs to the TRAFAC class TrmE-Era-EngA-EngB-Septin-like GTPase superfamily. Era GTPase family. Monomer.

The protein resides in the cytoplasm. It is found in the cell membrane. In terms of biological role, an essential GTPase that binds both GDP and GTP, with rapid nucleotide exchange. Plays a role in 16S rRNA processing and 30S ribosomal subunit biogenesis and possibly also in cell cycle regulation and energy metabolism. The sequence is that of GTPase Era from Streptococcus equi subsp. zooepidemicus (strain H70).